A 62-amino-acid chain; its full sequence is Photosystem II reaction center protein Z (62 aa).

Helical transmembrane passes span 8 to 28 (AVFALIATSSILLISVPVVFA) and 41 to 61 (FSGTSLWIGLVFLVGILNSLI).

The protein belongs to the PsbZ family. PSII is composed of 1 copy each of membrane proteins PsbA, PsbB, PsbC, PsbD, PsbE, PsbF, PsbH, PsbI, PsbJ, PsbK, PsbL, PsbM, PsbT, PsbY, PsbZ, Psb30/Ycf12, at least 3 peripheral proteins of the oxygen-evolving complex and a large number of cofactors. It forms dimeric complexes.

The protein resides in the plastid. Its subcellular location is the chloroplast thylakoid membrane. Functionally, may control the interaction of photosystem II (PSII) cores with the light-harvesting antenna, regulates electron flow through the 2 photosystem reaction centers. PSII is a light-driven water plastoquinone oxidoreductase, using light energy to abstract electrons from H(2)O, generating a proton gradient subsequently used for ATP formation. This is Photosystem II reaction center protein Z from Nymphaea alba (White water-lily).